A 541-amino-acid chain; its full sequence is Long-chain-fatty-acid--CoA ligase (541 aa).

Thr-184 lines the Mg(2+) pocket. Val-231 and Trp-234 together coordinate ATP. Tetradecanoyl-AMP contacts are provided by Gly-302, Gln-322, Gly-323, and Thr-327. ATP-binding residues include Gly-323 and Thr-327. Position 328 (Glu-328) interacts with Mg(2+). ATP-binding residues include Asp-418, Lys-435, Lys-439, and Trp-444. Residues Asp-418, Lys-435, and Lys-439 each coordinate tetradecanoyl-AMP.

Belongs to the ATP-dependent AMP-binding enzyme family. In terms of assembly, forms a domain swapped homodimer. Mg(2+) is required as a cofactor.

It carries out the reaction a long-chain fatty acid + ATP + CoA = a long-chain fatty acyl-CoA + AMP + diphosphate. The enzyme catalyses tetradecanoate + ATP + CoA = tetradecanoyl-CoA + AMP + diphosphate. The catalysed reaction is hexadecanoate + ATP + CoA = hexadecanoyl-CoA + AMP + diphosphate. The protein operates within lipid metabolism; fatty acid metabolism. Catalyzes the esterification of a number of long chain fatty acids with CoA, resulting in the formation of long-chain fatty acyl-CoA. Myristate (C14) is the most efficiently processed fatty acid, followed by palmitate (C16). Also catalyzes the esterification of stearate (C18) and laurate (C12), but at lower efficiency. Does not catalyze the esterification of the unsaturated fatty acids mysteroleic and palmitoleic acids in vitro. In Thermus thermophilus (strain ATCC 27634 / DSM 579 / HB8), this protein is Long-chain-fatty-acid--CoA ligase.